The primary structure comprises 207 residues: Large ribosomal subunit protein uL4 (207 aa).

Residues 48–89 (SHKVKNRSEVRGGGRKPWRQKGTGRARQGSIRSPQWRGGGVV) are disordered. A compositionally biased stretch (basic residues) spans 60–71 (GGRKPWRQKGTG).

It belongs to the universal ribosomal protein uL4 family. In terms of assembly, part of the 50S ribosomal subunit.

In terms of biological role, one of the primary rRNA binding proteins, this protein initially binds near the 5'-end of the 23S rRNA. It is important during the early stages of 50S assembly. It makes multiple contacts with different domains of the 23S rRNA in the assembled 50S subunit and ribosome. Functionally, forms part of the polypeptide exit tunnel. The polypeptide is Large ribosomal subunit protein uL4 (Bacillus velezensis (strain DSM 23117 / BGSC 10A6 / LMG 26770 / FZB42) (Bacillus amyloliquefaciens subsp. plantarum)).